The chain runs to 678 residues: Probable N-methylproline demethylase (678 aa).

Residues glycine 59, glutamine 102, arginine 220, lysine 299, and 321 to 322 (TR) contribute to the FMN site. [4Fe-4S] cluster contacts are provided by cysteine 345, cysteine 351, and cysteine 363. Residues alanine 396, glutamate 415, glutamine 423, arginine 433, and alanine 460 each coordinate FAD.

This sequence in the N-terminal section; belongs to the NADH:flavin oxidoreductase/NADH oxidase family. The cofactor is FMN. It depends on FAD as a cofactor. [4Fe-4S] cluster serves as cofactor.

It carries out the reaction N-methyl-L-proline + NAD(+) + H2O = L-proline + formaldehyde + NADH + H(+). It functions in the pathway amine and polyamine degradation; stachydrine degradation. Its function is as follows. Possible NADH-dependent oxidase, may function as a demethylase that converts N-methylproline to proline. The polypeptide is Probable N-methylproline demethylase (Rhizobium meliloti (strain 1021) (Ensifer meliloti)).